The chain runs to 980 residues: Glutamate receptor ionotropic, kainate 5 (980 aa).

A signal peptide spans 1 to 14 (MPAELLLLLIVAFA). At 15–544 (SPSCQVLSSL…YFSFLDPFSP (530 aa)) the chain is on the extracellular side. Intrachain disulfides connect C36–C292, C83–C334, and C165–C170. N-linked (GlcNAc...) asparagine glycosylation is found at N219, N271, N285, N322, N372, N394, N400, N407, N414, and N478. A helical membrane pass occupies residues 545–565 (AVWLFMLLAYLAVSCVLFLAA). Topologically, residues 566-622 (RLSPYEWYNPHPCLRARPHILENQYTLGNSLWFPVGGFMQQGSEIMPRALSTRCVSG) are cytoplasmic. The chain crosses the membrane as a helical span at residues 623-643 (VWWAFTLIIISSYTANLAAFL). Over 644–803 (TVQRMEVPVE…HRAKGLGMEN (160 aa)) the chain is Extracellular. N735 is a glycosylation site (N-linked (GlcNAc...) asparagine). Residues 804-824 (IGGIFIVLICGLIIAVFVAVM) form a helical membrane-spanning segment. Residues 825 to 980 (EFIWSTRRSA…AGPRELAEHE (156 aa)) lie on the Cytoplasmic side of the membrane. Disordered regions lie at residues 891–927 (YSAG…PTPC) and 944–980 (ASGA…AEHE). Positions 894-903 (GAGGDAGSAH) are enriched in gly residues.

The protein belongs to the glutamate-gated ion channel (TC 1.A.10.1) family. GRIK5 subfamily. As to quaternary structure, homotetramer. Heterotetramer with GRIK2. Can form functional heteromeric receptors with GRIK1 and GRIK2. Can form functional heteromeric receptors with GRIK3.

Its subcellular location is the cell membrane. It localises to the postsynaptic cell membrane. It is found in the presynaptic cell membrane. Its function is as follows. Ionotropic glutamate receptor that functions as a cation-permeable ligand-gated ion channel, gated by L-glutamate and the glutamatergic agonist kainic acid. Cannot form functional channels on its own and produces channel activity only in heteromeric assembly with GRIK1 and GRIK2 subunits. Can form functional heteromeric receptors with GRIK3. The chain is Glutamate receptor ionotropic, kainate 5 (GRIK5) from Homo sapiens (Human).